We begin with the raw amino-acid sequence, 715 residues long: MTTTSAFMLNVRLDNVAVVAIDVPGEKVNTLKAEFAAQVRAILKQIRENKALQGVVFISAKADNFIAGADINMIGHCQNAQEAETLARQGQQLMAEIQALPVPVIAAIHGACLGGGLEMALACHRRICTDDVKTVLGLPEVQLGLLPGSGGTQRLPRLVGVSTALDMILTGKQLRARQALKAGLVDDVVPQTILLEAAVELAKKERLAQRTLPVRERILAGPLGRALLFRLVRKKTAQKTQGNYPATERIIDVIETGLAQGSSSGYDAEARAFGELAMTPQSQALRAVFFASTEVKKDPGSDAPPGPLNSVGILGGGLMGGGIAWVTACKGGLPVRIKDINTQGINHALKYSWDLLETKVRRRHIKASERDKQLALISGSTDYRGFSHRDLVIEAVFEDLPLKQQMVAEVEQNCATHTIFASNTSSLPIGDIAANAARPEQVIGLHFFSPVEKMPLVEVIPHASTSAQTIATTVKLAKKQGKTPIVVSDKAGFYVNRILAPYINEAIRMLTEGERVEHIDAALVKFGFPVGPIQLLDEVGIDTGTKIIPVLEAAYGERFSAPANVVASILNDDRKGRKNGRGFYLYGEKGRKSKKQVDPAIYKLIGVQGQSRLSAQQVAERCVMLMLNEAARCFDEKVIRSARDGDIGAVFGIGFPPFLGGPFRYMDALGPGEMVATLQRLAALYGPRYAPCEQLVRMAERREHFWTNGETDQGN.

Residues 1–190 (MTTTSAFMLN…KAGLVDDVVP (190 aa)) form an enoyl-CoA hydratase region. Residues 306-715 (GPLNSVGILG…WTNGETDQGN (410 aa)) are 3-hydroxyacyl-CoA dehydrogenase.

It in the N-terminal section; belongs to the enoyl-CoA hydratase/isomerase family. The protein in the central section; belongs to the 3-hydroxyacyl-CoA dehydrogenase family. Heterotetramer of two alpha chains (FadJ) and two beta chains (FadI).

It is found in the cytoplasm. It catalyses the reaction a (3S)-3-hydroxyacyl-CoA = a (2E)-enoyl-CoA + H2O. The catalysed reaction is a 4-saturated-(3S)-3-hydroxyacyl-CoA = a (3E)-enoyl-CoA + H2O. The enzyme catalyses a (3S)-3-hydroxyacyl-CoA + NAD(+) = a 3-oxoacyl-CoA + NADH + H(+). It carries out the reaction (3S)-3-hydroxybutanoyl-CoA = (3R)-3-hydroxybutanoyl-CoA. It participates in lipid metabolism; fatty acid beta-oxidation. Its function is as follows. Catalyzes the formation of a hydroxyacyl-CoA by addition of water on enoyl-CoA. Also exhibits 3-hydroxyacyl-CoA epimerase and 3-hydroxyacyl-CoA dehydrogenase activities. The sequence is that of Fatty acid oxidation complex subunit alpha from Salmonella newport (strain SL254).